A 378-amino-acid chain; its full sequence is Alanine dehydrogenase (378 aa).

Substrate contacts are provided by Arg-15 and Lys-74. Catalysis depends on His-95, which acts as the Proton donor/acceptor. NAD(+)-binding positions include Ser-132, 176 to 177, Asp-196, Ser-218, 237 to 238, 265 to 268, and 297 to 300; these read VV, VL, VAID, and VANM. Asp-268 acts as the Proton donor/acceptor in catalysis.

The protein belongs to the AlaDH/PNT family. In terms of assembly, homohexamer. Trimer of dimer.

It localises to the cytoplasm. The catalysed reaction is L-alanine + NAD(+) + H2O = pyruvate + NH4(+) + NADH + H(+). Its pathway is amino-acid degradation; L-alanine degradation via dehydrogenase pathway; NH(3) and pyruvate from L-alanine: step 1/1. Its function is as follows. Catalyzes the reversible oxidative deamination of L-alanine to pyruvate. Oxidative deamination proceeds through a sequential, ordered ternary-binary mechanism, where NAD(+) binds first followed by L-alanine; the products are released in the order ammonia, pyruvate and NADH. Disruption blocks sporulation probably in stage V; 20-30% sporulation can be restored if the media is supplemented with pyruvate, suggesting lack of pyruvate blocks sporulation. Thus it is a key factor in the assimilation of L-alanine as an energy source via the tricarboxylic acid cycle during sporulation. This chain is Alanine dehydrogenase, found in Bacillus subtilis (strain 168).